The following is a 245-amino-acid chain: tRNA pseudouridine synthase A 2 (245 aa).

Asp53 (nucleophile) is an active-site residue. Residue Tyr111 coordinates substrate.

Belongs to the tRNA pseudouridine synthase TruA family. As to quaternary structure, homodimer.

The catalysed reaction is uridine(38/39/40) in tRNA = pseudouridine(38/39/40) in tRNA. In terms of biological role, formation of pseudouridine at positions 38, 39 and 40 in the anticodon stem and loop of transfer RNAs. This Bacillus anthracis protein is tRNA pseudouridine synthase A 2.